The chain runs to 208 residues: Small ribosomal subunit protein uS4 (208 aa).

In terms of domain architecture, S4 RNA-binding spans 98-161; that stretch reads RRLDNVVYRM…KSNPQVVRAM (64 aa).

The protein belongs to the universal ribosomal protein uS4 family. Part of the 30S ribosomal subunit. Contacts protein S5. The interaction surface between S4 and S5 is involved in control of translational fidelity.

In terms of biological role, one of the primary rRNA binding proteins, it binds directly to 16S rRNA where it nucleates assembly of the body of the 30S subunit. Its function is as follows. With S5 and S12 plays an important role in translational accuracy. This is Small ribosomal subunit protein uS4 from Helicobacter acinonychis (strain Sheeba).